Reading from the N-terminus, the 213-residue chain is Probable lipid phosphate phosphatase beta (213 aa).

The next 5 membrane-spanning stretches (helical) occupy residues 30–50 (PFLP…RFSF), 67–87 (VPFL…KLIF), 118–138 (VFFV…SMTG), 158–178 (VEVV…RILL), and 181–201 (HYVL…LFAL).

This sequence belongs to the PA-phosphatase related phosphoesterase family.

It localises to the membrane. The polypeptide is Probable lipid phosphate phosphatase beta (LPPB) (Arabidopsis thaliana (Mouse-ear cress)).